The primary structure comprises 482 residues: tRNA sulfurtransferase (482 aa).

The THUMP domain occupies 61–165 (AEVLEILTHT…NDRLNQVLAS (105 aa)). Residues 183 to 184 (LI), lysine 265, glycine 287, and glutamine 296 contribute to the ATP site. Cysteine 344 and cysteine 456 are disulfide-bonded. In terms of domain architecture, Rhodanese spans 404-482 (VEEHAIVLDI…GFNNVKVYRP (79 aa)). The active-site Cysteine persulfide intermediate is the cysteine 456.

It belongs to the ThiI family.

It is found in the cytoplasm. It catalyses the reaction [ThiI sulfur-carrier protein]-S-sulfanyl-L-cysteine + a uridine in tRNA + 2 reduced [2Fe-2S]-[ferredoxin] + ATP + H(+) = [ThiI sulfur-carrier protein]-L-cysteine + a 4-thiouridine in tRNA + 2 oxidized [2Fe-2S]-[ferredoxin] + AMP + diphosphate. The catalysed reaction is [ThiS sulfur-carrier protein]-C-terminal Gly-Gly-AMP + S-sulfanyl-L-cysteinyl-[cysteine desulfurase] + AH2 = [ThiS sulfur-carrier protein]-C-terminal-Gly-aminoethanethioate + L-cysteinyl-[cysteine desulfurase] + A + AMP + 2 H(+). Its pathway is cofactor biosynthesis; thiamine diphosphate biosynthesis. In terms of biological role, catalyzes the ATP-dependent transfer of a sulfur to tRNA to produce 4-thiouridine in position 8 of tRNAs, which functions as a near-UV photosensor. Also catalyzes the transfer of sulfur to the sulfur carrier protein ThiS, forming ThiS-thiocarboxylate. This is a step in the synthesis of thiazole, in the thiamine biosynthesis pathway. The sulfur is donated as persulfide by IscS. The sequence is that of tRNA sulfurtransferase from Vibrio campbellii (strain ATCC BAA-1116).